Consider the following 124-residue polypeptide: Small ribosomal subunit protein uS12 (124 aa).

At aspartate 89 the chain carries 3-methylthioaspartic acid.

This sequence belongs to the universal ribosomal protein uS12 family. As to quaternary structure, part of the 30S ribosomal subunit. Contacts proteins S8 and S17. May interact with IF1 in the 30S initiation complex.

With S4 and S5 plays an important role in translational accuracy. Its function is as follows. Interacts with and stabilizes bases of the 16S rRNA that are involved in tRNA selection in the A site and with the mRNA backbone. Located at the interface of the 30S and 50S subunits, it traverses the body of the 30S subunit contacting proteins on the other side and probably holding the rRNA structure together. The combined cluster of proteins S8, S12 and S17 appears to hold together the shoulder and platform of the 30S subunit. This is Small ribosomal subunit protein uS12 from Koribacter versatilis (strain Ellin345).